We begin with the raw amino-acid sequence, 166 residues long: Nucleotide-binding protein SUN_0226 (166 aa).

It belongs to the YajQ family.

Functionally, nucleotide-binding protein. This is Nucleotide-binding protein SUN_0226 from Sulfurovum sp. (strain NBC37-1).